The sequence spans 131 residues: Ribonuclease P protein component (131 aa).

This sequence belongs to the RnpA family. In terms of assembly, consists of a catalytic RNA component (M1 or rnpB) and a protein subunit.

The catalysed reaction is Endonucleolytic cleavage of RNA, removing 5'-extranucleotides from tRNA precursor.. Functionally, RNaseP catalyzes the removal of the 5'-leader sequence from pre-tRNA to produce the mature 5'-terminus. It can also cleave other RNA substrates such as 4.5S RNA. The protein component plays an auxiliary but essential role in vivo by binding to the 5'-leader sequence and broadening the substrate specificity of the ribozyme. The protein is Ribonuclease P protein component of Cyanothece sp. (strain PCC 7425 / ATCC 29141).